Reading from the N-terminus, the 281-residue chain is Small ribosomal subunit protein uS2 (281 aa).

The interval 229–281 (RSGANKTEGEAAEQPMAAWEKELLTNEAPAEASAEAAAPAAAEGETAEAPKAE) is disordered. Over residues 255–275 (EAPAEASAEAAAPAAAEGETA) the composition is skewed to low complexity.

This sequence belongs to the universal ribosomal protein uS2 family.

This is Small ribosomal subunit protein uS2 from Bifidobacterium longum subsp. infantis (strain ATCC 15697 / DSM 20088 / JCM 1222 / NCTC 11817 / S12).